The chain runs to 745 residues: Phosphoribosylformylglycinamidine synthase subunit PurL (745 aa).

Residue H41 is part of the active site. ATP contacts are provided by Y44 and K83. Position 85 (E85) interacts with Mg(2+). Substrate contacts are provided by residues 86–89 (SHNH) and R108. The Proton acceptor role is filled by H87. Residue D109 participates in Mg(2+) binding. Q232 is a binding site for substrate. Mg(2+) is bound at residue D260. 304 to 306 (ESQ) serves as a coordination point for substrate. D494 and G531 together coordinate ATP. N532 provides a ligand contact to Mg(2+). S534 contacts substrate.

It belongs to the FGAMS family. Monomer. Part of the FGAM synthase complex composed of 1 PurL, 1 PurQ and 2 PurS subunits.

It localises to the cytoplasm. The catalysed reaction is N(2)-formyl-N(1)-(5-phospho-beta-D-ribosyl)glycinamide + L-glutamine + ATP + H2O = 2-formamido-N(1)-(5-O-phospho-beta-D-ribosyl)acetamidine + L-glutamate + ADP + phosphate + H(+). Its pathway is purine metabolism; IMP biosynthesis via de novo pathway; 5-amino-1-(5-phospho-D-ribosyl)imidazole from N(2)-formyl-N(1)-(5-phospho-D-ribosyl)glycinamide: step 1/2. Its function is as follows. Part of the phosphoribosylformylglycinamidine synthase complex involved in the purines biosynthetic pathway. Catalyzes the ATP-dependent conversion of formylglycinamide ribonucleotide (FGAR) and glutamine to yield formylglycinamidine ribonucleotide (FGAM) and glutamate. The FGAM synthase complex is composed of three subunits. PurQ produces an ammonia molecule by converting glutamine to glutamate. PurL transfers the ammonia molecule to FGAR to form FGAM in an ATP-dependent manner. PurS interacts with PurQ and PurL and is thought to assist in the transfer of the ammonia molecule from PurQ to PurL. This chain is Phosphoribosylformylglycinamidine synthase subunit PurL, found in Aquifex aeolicus (strain VF5).